Consider the following 247-residue polypeptide: Probable 2-phosphosulfolactate phosphatase (247 aa).

The protein belongs to the ComB family. It depends on Mg(2+) as a cofactor.

The catalysed reaction is (2R)-O-phospho-3-sulfolactate + H2O = (2R)-3-sulfolactate + phosphate. The sequence is that of Probable 2-phosphosulfolactate phosphatase from Clostridium perfringens (strain 13 / Type A).